We begin with the raw amino-acid sequence, 140 residues long: 6,7-dimethyl-8-ribityllumazine synthase (140 aa).

5-amino-6-(D-ribitylamino)uracil contacts are provided by residues F11, 43–45 (SFD), and 67–69 (CVI). 72-73 (DT) provides a ligand contact to (2S)-2-hydroxy-3-oxobutyl phosphate. The active-site Proton donor is H75. L100 lines the 5-amino-6-(D-ribitylamino)uracil pocket. R115 is a (2S)-2-hydroxy-3-oxobutyl phosphate binding site.

It belongs to the DMRL synthase family. In terms of assembly, forms an icosahedral capsid composed of 60 subunits, arranged as a dodecamer of pentamers.

It catalyses the reaction (2S)-2-hydroxy-3-oxobutyl phosphate + 5-amino-6-(D-ribitylamino)uracil = 6,7-dimethyl-8-(1-D-ribityl)lumazine + phosphate + 2 H2O + H(+). Its pathway is cofactor biosynthesis; riboflavin biosynthesis; riboflavin from 2-hydroxy-3-oxobutyl phosphate and 5-amino-6-(D-ribitylamino)uracil: step 1/2. Catalyzes the formation of 6,7-dimethyl-8-ribityllumazine by condensation of 5-amino-6-(D-ribitylamino)uracil with 3,4-dihydroxy-2-butanone 4-phosphate. This is the penultimate step in the biosynthesis of riboflavin. This chain is 6,7-dimethyl-8-ribityllumazine synthase, found in Methanococcus vannielii (strain ATCC 35089 / DSM 1224 / JCM 13029 / OCM 148 / SB).